We begin with the raw amino-acid sequence, 1014 residues long: SUMO-specific isopeptidase USPL1 (1014 aa).

Disordered stretches follow at residues 137-158 and 275-318; these read TFTD…EEQP and EEKP…VSDE. Positions 275-289 are enriched in basic and acidic residues; the sequence is EEKPVSLVHTEDQHL. One can recognise a USP domain in the interval 355 to 636; it reads LFWKNEENMC…EFHILFWETD (282 aa). Residue Cys364 is the Nucleophile of the active site. The tract at residues 364 to 631 is SUMO-binding; it reads CWLDAMLVML…PFPSSEFHIL (268 aa). The active-site Proton acceptor is His592. 2 disordered regions span residues 794–823 and 844–867; these read HPSF…YDKH and NSQP…AGQE. Residues 802-815 are compositionally biased toward pro residues; it reads IRPPPPLPPAPKPK.

The protein belongs to the peptidase C19 family.

Its subcellular location is the nucleus. The protein localises to the cajal body. In terms of biological role, SUMO-specific isopeptidase involved in protein desumoylation. Specifically binds SUMO proteins with a higher affinity for sumo2 and sumo3 which it cleaves more efficiently. Also able to process full-length SUMO proteins to their mature forms. Plays a key role in RNA polymerase-II-mediated snRNA transcription in the Cajal bodies. Is a component of complexes that can bind to U snRNA genes. This is SUMO-specific isopeptidase USPL1 (uspl1) from Danio rerio (Zebrafish).